The chain runs to 887 residues: Phosphatidylinositol 3-kinase catalytic subunit type 3 (887 aa).

The C2 PI3K-type domain maps to 35–184 (YKAVLEDPML…LAKLTKAHRQ (150 aa)). Residues 150–170 (EADGSEPTKTPGRTSSTLSED) are disordered. The segment covering 156 to 170 (PTKTPGRTSSTLSED) has biased composition (polar residues). The residue at position 163 (Thr163) is a Phosphothreonine; by AMPK. Phosphoserine; by AMPK is present on Ser165. Phosphoserine is present on residues Ser244, Ser261, and Ser282. A PIK helical domain is found at 282-520 (SDHGLKPNAA…PKTHEMYLNV (239 aa)). Disordered regions lie at residues 416–435 (EPTKKESQGSVSESVSNSGI) and 446–468 (ITSPLPPVSSPPPASKTKESSDG). The span at 423 to 435 (QGSVSESVSNSGI) shows a compositional bias: low complexity. Pro residues predominate over residues 449 to 459 (PLPPVSSPPPA). The region spanning 605-871 (IPETATLFKS…LIDESVHALF (267 aa)) is the PI3K/PI4K catalytic domain. A G-loop region spans residues 611–617 (LFKSALM). The segment at 740–748 (GVGDRHLDN) is catalytic loop. Residues 759 to 780 (HIDFGYILGRDPKPLPPPMKLN) form an activation loop region.

This sequence belongs to the PI3/PI4-kinase family. In terms of assembly, component of the PI3K (PI3KC3/PI3K-III/class III phosphatidylinositol 3-kinase) complex the core of which is composed of the catalytic subunit PIK3C3, the regulatory subunit PIK3R4 and BECN1 associating with additional regulatory/auxiliary subunits to form alternative complex forms. Alternative complex forms containing a fourth regulatory subunit in a mutually exclusive manner are: the PI3K complex I (PI3KC3-C1) containing ATG14, and the PI3K complex II (PI3KC3-C2) containing UVRAG. PI3KC3-C1 displays a V-shaped architecture with PIK3R4 serving as a bridge between PIK3C3 and the ATG14:BECN1 subcomplex. Both, PI3KC3-C1 and PI3KC3-C2, can associate with further regulatory subunits such as RUBCN, SH3GLB1/Bif-1 and AMBRA1. PI3KC3-C1 probably associates with PIK3CB. Interacts with RAB7A in the presence of PIK3R4. Interacts with AMBRA1. Interacts with BECN1P1/BECN2. Interacts with SLAMF1. May be a component of a complex composed of RAB5A (in GDP-bound form), DYN2 and PIK3C3. Interacts with NCKAP1L. Interacts with ATG14; this interaction is increased in the absence of TMEM39A. Interacts with STEEP1; the interaction is STING1-dependent and required for trafficking of STING1 from the endoplasmic reticulum. Interacts with YWHAG. Interacts with ARMC3. It depends on Mn(2+) as a cofactor. Post-translationally, ubiquitinated via 'Lys-29'- and 'Lys-48'-linked ubiquitination by UBE3C, promoting its degradation. Deubiquitination by ZRANB1/TRABID promotes its stabilization, leading to autophagosome maturation.

Its subcellular location is the midbody. The protein resides in the late endosome. It is found in the cytoplasmic vesicle. The protein localises to the autophagosome. It catalyses the reaction a 1,2-diacyl-sn-glycero-3-phospho-(1D-myo-inositol) + ATP = a 1,2-diacyl-sn-glycero-3-phospho-(1D-myo-inositol-3-phosphate) + ADP + H(+). Its function is as follows. Catalytic subunit of the PI3K complex that mediates formation of phosphatidylinositol 3-phosphate; different complex forms are believed to play a role in multiple membrane trafficking pathways: PI3KC3-C1 is involved in initiation of autophagosomes and PI3KC3-C2 in maturation of autophagosomes and endocytosis. As part of PI3KC3-C1, promotes endoplasmic reticulum membrane curvature formation prior to vesicle budding. Involved in regulation of degradative endocytic trafficking and required for the abscission step in cytokinesis, probably in the context of PI3KC3-C2. Involved in the transport of lysosomal enzyme precursors to lysosomes. Required for transport from early to late endosomes. This is Phosphatidylinositol 3-kinase catalytic subunit type 3 from Sus scrofa (Pig).